A 225-amino-acid chain; its full sequence is Transcriptional regulatory protein CssR (225 aa).

Residues 4–117 (TIYLVEDEDN…ELIIRVQKLL (114 aa)) form the Response regulatory domain. Asp-52 is modified (4-aspartylphosphate). A DNA-binding region (ompR/PhoB-type) is located at residues 129 to 224 (KNEIAVSSYR…IYGFGYRMMS (96 aa)).

In terms of processing, phosphorylated by CssS.

It localises to the cytoplasm. In terms of biological role, member of the two-component regulatory system CssS/CssR required to control the cellular response to secretion stress. This is Transcriptional regulatory protein CssR (cssR) from Bacillus subtilis (strain 168).